The chain runs to 322 residues: UDP-N-acetylenolpyruvoylglucosamine reductase (322 aa).

In terms of domain architecture, FAD-binding PCMH-type spans 36-202; the sequence is RAGGPAQVLF…TSVLFEGVPG (167 aa). Residue arginine 182 is part of the active site. Serine 231 acts as the Proton donor in catalysis. The active site involves glutamate 301.

This sequence belongs to the MurB family. FAD serves as cofactor.

Its subcellular location is the cytoplasm. The enzyme catalyses UDP-N-acetyl-alpha-D-muramate + NADP(+) = UDP-N-acetyl-3-O-(1-carboxyvinyl)-alpha-D-glucosamine + NADPH + H(+). The protein operates within cell wall biogenesis; peptidoglycan biosynthesis. Its function is as follows. Cell wall formation. In Brucella canis (strain ATCC 23365 / NCTC 10854 / RM-666), this protein is UDP-N-acetylenolpyruvoylglucosamine reductase.